The sequence spans 175 residues: UPF0398 protein SPD_0338 (175 aa).

This sequence belongs to the UPF0398 family.

This chain is UPF0398 protein SPD_0338, found in Streptococcus pneumoniae serotype 2 (strain D39 / NCTC 7466).